We begin with the raw amino-acid sequence, 28 residues long: Cyclotide vodo I1 (28 aa).

Disulfide bonds link cysteine 4–cysteine 18, cysteine 8–cysteine 20, and cysteine 13–cysteine 25.

In terms of processing, this is a cyclic peptide. Post-translationally, contains 3 disulfide bonds.

Its function is as follows. Probably participates in a plant defense mechanism. The polypeptide is Cyclotide vodo I1 (Viola odorata (Sweet violet)).